The primary structure comprises 198 residues: Fimbriae W protein (198 aa).

The 66-residue stretch at 127-192 (HYCTTRHFSV…QFLKYIRVNL (66 aa)) folds into the HTH luxR-type domain.

It is found in the fimbrium. In Salmonella typhimurium (strain LT2 / SGSC1412 / ATCC 700720), this protein is Fimbriae W protein (fimW).